Consider the following 123-residue polypeptide: Small ribosomal subunit protein uS12 (123 aa).

At Asp-89 the chain carries 3-methylthioaspartic acid. Residues 104–123 (TAGVKDRKQARSKYGAKRPK) form a disordered region. Residues 113 to 123 (ARSKYGAKRPK) are compositionally biased toward basic residues.

Belongs to the universal ribosomal protein uS12 family. In terms of assembly, part of the 30S ribosomal subunit. Contacts proteins S8 and S17. May interact with IF1 in the 30S initiation complex.

Functionally, with S4 and S5 plays an important role in translational accuracy. In terms of biological role, interacts with and stabilizes bases of the 16S rRNA that are involved in tRNA selection in the A site and with the mRNA backbone. Located at the interface of the 30S and 50S subunits, it traverses the body of the 30S subunit contacting proteins on the other side and probably holding the rRNA structure together. The combined cluster of proteins S8, S12 and S17 appears to hold together the shoulder and platform of the 30S subunit. The chain is Small ribosomal subunit protein uS12 from Neisseria meningitidis serogroup C (strain 053442).